Here is a 547-residue protein sequence, read N- to C-terminus: Sensor histidine kinase CitA (547 aa).

The Cytoplasmic segment spans residues 1–23 (MSIYPMYTRKITHWFARRSFQNR). Residues 24–44 (IFLLILFTSTIVMLAMSWYLT) traverse the membrane as a helical segment. At 45-180 (DITEERLHYQ…TIEQLENWLS (136 aa)) the chain is on the periplasmic side. Positions 109, 112, 150, and 152 each coordinate citrate. Residues 181 to 201 (LQISSLLIPMAIMLLLLLFCA) traverse the membrane as a helical segment. Residues 202–547 (RRFSLHIKKQ…IPLTRDEHHG (346 aa)) are Cytoplasmic-facing. The 40-residue stretch at 225-264 (IQQSVLFESVFEGLIAIDSDYKITAINQTARRLLNLSQPE) folds into the PAS domain. One can recognise a Histidine kinase domain in the interval 347 to 542 (AVQHEHRNLI…IFTLYIPLTR (196 aa)). Residue histidine 350 is modified to Phosphohistidine; by autocatalysis.

In terms of assembly, homodimer. In vitro CitB and the CitA kinase domain form a complex, formation of which is enhanced by ATP. Autophosphorylated.

Its subcellular location is the cell inner membrane. The enzyme catalyses ATP + protein L-histidine = ADP + protein N-phospho-L-histidine.. Functionally, member of the two-component regulatory system CitA/CitB. Probably activates CitB by phosphorylation. The periplasmic domain binds H-citrate(2-), which is essential for induction of the citrate-fermentation genes. The polypeptide is Sensor histidine kinase CitA (citA) (Klebsiella pneumoniae).